We begin with the raw amino-acid sequence, 267 residues long: Glutamate 5-kinase (267 aa).

Residue lysine 15 coordinates ATP. Substrate contacts are provided by serine 55, aspartate 142, and asparagine 158. ATP-binding positions include 178 to 179 and 220 to 226; these read SD and TGGMATK.

Belongs to the glutamate 5-kinase family.

It is found in the cytoplasm. The enzyme catalyses L-glutamate + ATP = L-glutamyl 5-phosphate + ADP. Its pathway is amino-acid biosynthesis; L-proline biosynthesis; L-glutamate 5-semialdehyde from L-glutamate: step 1/2. Catalyzes the transfer of a phosphate group to glutamate to form L-glutamate 5-phosphate. The protein is Glutamate 5-kinase of Ligilactobacillus salivarius (strain UCC118) (Lactobacillus salivarius).